Consider the following 1888-residue polypeptide: Tensin-1 (1888 aa).

Residues 21 to 31 (PQPPGTPPGPA) are compositionally biased toward pro residues. Residues 21 to 45 (PQPPGTPPGPARPERCEPGGAAPDP) are disordered. Residues 61-108 (THHFKVKAFKKVKPCGICRQAITREGCVCKVCSFSCHRKCQAKVAAPC) form a Phorbol-ester/DAG-type zinc finger. A disordered region spans residues 132–174 (GEGDCRVGSSPKNLEEGGSMRVSPSIQPQPQSQPTSLSRNTSV). Residues 154–167 (SPSIQPQPQSQPTS) show a composition bias toward low complexity. The region spanning 175–347 (SRAMEDSCEL…HYFSGLLSGS (173 aa)) is the Phosphatase tensin-type domain. In terms of domain architecture, C2 tensin-type spans 352 to 478 (NKPLFLHHVI…GKVEFVFSYG (127 aa)). Ser509 and Ser535 each carry phosphoserine. At Tyr537 the chain carries Phosphotyrosine. 3 disordered regions span residues 543–608 (KDSL…PQEK), 696–722 (VTNTSESGYPETLSPLTNGLDKPYSTE), and 789–854 (RSQS…SAET). Residue Ser549 is modified to Phosphoserine. The segment covering 571–584 (LSVSSDSGNSTAST) has biased composition (polar residues). The residue at position 604 (Ser604) is a Phosphoserine. Ser792 is modified (phosphoserine). Positions 835 to 852 (RSPLQSLARSKPSPQLSA) are enriched in polar residues. Ser867 is subject to Phosphoserine. Disordered stretches follow at residues 893–1077 (PLHK…RSPV) and 1109–1555 (EEME…AGSL). Residues 905–922 (PGASPLSSQPLLGSSRQS) are compositionally biased toward low complexity. A phosphoserine mark is found at Ser930, Ser935, and Ser952. The segment covering 962–986 (GSNQSFHPKSPASSTFLPSPHSSAG) has biased composition (polar residues). Residue Thr1015 is modified to Phosphothreonine. Phosphoserine is present on Ser1054. Positions 1057 to 1069 (QYENQSPEATSPR) are enriched in polar residues. Position 1058 is a phosphotyrosine (Tyr1058). Phosphoserine occurs at positions 1062, 1118, and 1122. A compositionally biased stretch (basic and acidic residues) spans 1169 to 1179 (EVTKPPEEPRS). Residues 1227–1239 (SPSPLSTSSPILS) are compositionally biased toward low complexity. Positions 1240 to 1257 (ADSTSVGSFPSVVSSDQG) are enriched in polar residues. A Phosphoserine modification is found at Ser1279. Residues 1284 to 1300 (SYQSSSPVPVGGSSYNS) are compositionally biased toward low complexity. Polar residues predominate over residues 1301-1322 (PDYSLQPFSSSPESQGQPQYSA). Ser1321 is a glycosylation site (O-linked (GalNAc...) serine). Ser1331 is modified (phosphoserine). A Phosphothreonine modification is found at Thr1343. The residue at position 1346 (Ser1346) is a Phosphoserine. Position 1420 is a phosphothreonine (Thr1420). Ser1423 is subject to Phosphoserine. Polar residues predominate over residues 1436–1446 (NLASSLHSNAV). Ser1448, Ser1463, and Ser1468 each carry phosphoserine. Polar residues predominate over residues 1490-1507 (LSRQSSASGYQAPSTPSF). The segment covering 1518–1530 (SSPATSPSPDSAA) has biased composition (low complexity). Phosphoserine occurs at positions 1535, 1547, 1554, and 1599. Positions 1616–1725 (WYKPEISREQ…ALPCKLVIPS (110 aa)) constitute an SH2 domain. Ser1741 bears the Phosphoserine mark. A PTB domain is found at 1751-1885 (ACNVLFVNSV…FVSKVMLSAG (135 aa)).

Belongs to the PTEN phosphatase protein family. Binds to actin filaments and interacts with phosphotyrosine-containing proteins. Interacts with STARD8. Interacts with protein phosphatase PPP1CA. Interacts (via N-terminus) with Rho GTPase-activating protein DLC1; the interaction is decreased by phosphorylation of TNS1. Interacts with tyrosine-phosphorylated proteins BCAR1/p130Cas and PTK2/FAK; the interactions are increased by phosphorylation of TNS1. Post-translationally, extensively phosphorylated on serine and threonine residues in a p38 MAPK-dependent manner which reduces interaction with DLC1 and increases interaction with tyrosine-phosphorylated proteins including BCAR1/p130cas and PTK2/FAK. The majority of the phosphorylated Ser/Thr residues are immediately adjacent to a proline residue. Also phosphorylated on tyrosine residues. In terms of processing, rapidly cleaved by calpain II.

It localises to the cell surface. It is found in the cell junction. The protein localises to the focal adhesion. Its subcellular location is the cytoplasm. The protein resides in the cytoskeleton. May act as a protein phosphatase and/or a lipid phosphatase. Involved in fibrillar adhesion formation. Essential for myofibroblast differentiation and myofibroblast-mediated extracellular matrix deposition. Enhances RHOA activation in the presence of DLC1. Plays a role in cell polarization and migration. May be involved in cartilage development and in linking signal transduction pathways to the cytoskeleton. The sequence is that of Tensin-1 from Mus musculus (Mouse).